The chain runs to 429 residues: 3-phosphoshikimate 1-carboxyvinyltransferase (429 aa).

3-phosphoshikimate is bound by residues Lys-23, Ser-24, and Arg-28. Lys-23 contributes to the phosphoenolpyruvate binding site. Residues Gly-95 and Arg-123 each coordinate phosphoenolpyruvate. The 3-phosphoshikimate site is built by Ser-168, Gln-170, Asp-316, and Lys-343. Residue Gln-170 coordinates phosphoenolpyruvate. Asp-316 (proton acceptor) is an active-site residue. Phosphoenolpyruvate-binding residues include Arg-347 and Arg-389.

Belongs to the EPSP synthase family. As to quaternary structure, monomer.

Its subcellular location is the cytoplasm. It catalyses the reaction 3-phosphoshikimate + phosphoenolpyruvate = 5-O-(1-carboxyvinyl)-3-phosphoshikimate + phosphate. It participates in metabolic intermediate biosynthesis; chorismate biosynthesis; chorismate from D-erythrose 4-phosphate and phosphoenolpyruvate: step 6/7. Catalyzes the transfer of the enolpyruvyl moiety of phosphoenolpyruvate (PEP) to the 5-hydroxyl of shikimate-3-phosphate (S3P) to produce enolpyruvyl shikimate-3-phosphate and inorganic phosphate. In Bacillus thuringiensis (strain Al Hakam), this protein is 3-phosphoshikimate 1-carboxyvinyltransferase.